The chain runs to 98 residues: Small ribosomal subunit protein bS6 (98 aa).

Belongs to the bacterial ribosomal protein bS6 family.

Its function is as follows. Binds together with bS18 to 16S ribosomal RNA. In Lacticaseibacillus paracasei (strain ATCC 334 / BCRC 17002 / CCUG 31169 / CIP 107868 / KCTC 3260 / NRRL B-441) (Lactobacillus paracasei), this protein is Small ribosomal subunit protein bS6.